The sequence spans 385 residues: 1-deoxy-D-xylulose 5-phosphate reductoisomerase (385 aa).

NADPH contacts are provided by Thr-10, Gly-11, Ser-12, Ile-13, and Asn-124. Position 125 (Lys-125) interacts with 1-deoxy-D-xylulose 5-phosphate. Glu-126 contacts NADPH. Asp-150 lines the Mn(2+) pocket. The 1-deoxy-D-xylulose 5-phosphate site is built by Ser-151, Glu-152, Ser-176, and His-199. Glu-152 serves as a coordination point for Mn(2+). Gly-205 is a binding site for NADPH. 1-deoxy-D-xylulose 5-phosphate-binding residues include Ser-212, Asn-217, Lys-218, and Glu-221. Glu-221 provides a ligand contact to Mn(2+).

This sequence belongs to the DXR family. Mg(2+) serves as cofactor. Mn(2+) is required as a cofactor.

The enzyme catalyses 2-C-methyl-D-erythritol 4-phosphate + NADP(+) = 1-deoxy-D-xylulose 5-phosphate + NADPH + H(+). It participates in isoprenoid biosynthesis; isopentenyl diphosphate biosynthesis via DXP pathway; isopentenyl diphosphate from 1-deoxy-D-xylulose 5-phosphate: step 1/6. In terms of biological role, catalyzes the NADPH-dependent rearrangement and reduction of 1-deoxy-D-xylulose-5-phosphate (DXP) to 2-C-methyl-D-erythritol 4-phosphate (MEP). This Clostridium kluyveri (strain NBRC 12016) protein is 1-deoxy-D-xylulose 5-phosphate reductoisomerase.